Reading from the N-terminus, the 419-residue chain is Tol-Pal system protein TolB (419 aa).

The signal sequence occupies residues 1 to 19 (MCNRIISLFLLLFTGQVIA).

Belongs to the TolB family. As to quaternary structure, the Tol-Pal system is composed of five core proteins: the inner membrane proteins TolA, TolQ and TolR, the periplasmic protein TolB and the outer membrane protein Pal. They form a network linking the inner and outer membranes and the peptidoglycan layer.

It localises to the periplasm. Part of the Tol-Pal system, which plays a role in outer membrane invagination during cell division and is important for maintaining outer membrane integrity. The protein is Tol-Pal system protein TolB of Legionella pneumophila (strain Paris).